We begin with the raw amino-acid sequence, 590 residues long: Enhancer of polycomb-like protein 1 (590 aa).

Disordered regions lie at residues 302-335 and 471-497; these read DEDLVNQKPQKRKPVEPPVVRQPTGAHLRQPVRS and TPPRELGEDRSDRWKYDSDSDDEEPPV. Positions 475–488 are enriched in basic and acidic residues; that stretch reads ELGEDRSDRWKYDS.

It belongs to the enhancer of polycomb family. In terms of assembly, component of the NuA4 histone acetyltransferase complex.

The protein resides in the nucleus. Functionally, component of the NuA4 histone acetyltransferase complex which is involved in transcriptional activation of selected genes principally by acetylation of nucleosomal histone H4 and H2A. The NuA4 complex is also involved in DNA repair. Involved in gene silencing by neighboring heterochromatin, blockage of the silencing spreading along the chromosome, and required for cell cycle progression through G2/M. This is Enhancer of polycomb-like protein 1 (EPL1) from Gibberella zeae (strain ATCC MYA-4620 / CBS 123657 / FGSC 9075 / NRRL 31084 / PH-1) (Wheat head blight fungus).